Here is an 80-residue protein sequence, read N- to C-terminus: Exodeoxyribonuclease 7 small subunit (80 aa).

This sequence belongs to the XseB family. As to quaternary structure, heterooligomer composed of large and small subunits.

The protein resides in the cytoplasm. The catalysed reaction is Exonucleolytic cleavage in either 5'- to 3'- or 3'- to 5'-direction to yield nucleoside 5'-phosphates.. Bidirectionally degrades single-stranded DNA into large acid-insoluble oligonucleotides, which are then degraded further into small acid-soluble oligonucleotides. The polypeptide is Exodeoxyribonuclease 7 small subunit (Vibrio cholerae serotype O1 (strain ATCC 39541 / Classical Ogawa 395 / O395)).